The following is a 155-amino-acid chain: Transcription antitermination protein NusB (155 aa).

Belongs to the NusB family.

Involved in transcription antitermination. Required for transcription of ribosomal RNA (rRNA) genes. Binds specifically to the boxA antiterminator sequence of the ribosomal RNA (rrn) operons. The sequence is that of Transcription antitermination protein NusB from Vibrio vulnificus (strain CMCP6).